Reading from the N-terminus, the 148-residue chain is Ubiquitin-conjugating enzyme E2 30 (148 aa).

Residues 1–147 (MASKRINKEL…AQSWTQKYAM (147 aa)) enclose the UBC core domain. Residue Cys-85 is the Glycyl thioester intermediate of the active site.

Belongs to the ubiquitin-conjugating enzyme family. Interacts with RGLG3 and RGLG4. As to expression, ubiquitously expressed at very low levels.

The catalysed reaction is S-ubiquitinyl-[E1 ubiquitin-activating enzyme]-L-cysteine + [E2 ubiquitin-conjugating enzyme]-L-cysteine = [E1 ubiquitin-activating enzyme]-L-cysteine + S-ubiquitinyl-[E2 ubiquitin-conjugating enzyme]-L-cysteine.. It functions in the pathway protein modification; protein ubiquitination. Its function is as follows. Accepts the ubiquitin from the E1 complex and catalyzes its covalent attachment to other proteins. This is Ubiquitin-conjugating enzyme E2 30 (UBC30) from Arabidopsis thaliana (Mouse-ear cress).